A 119-amino-acid chain; its full sequence is Autophagy-related protein 8B (119 aa).

Residue G117 is the site of Phosphatidylethanolamine amidated glycine attachment. Residues 118–119 constitute a propeptide, removed in mature form; the sequence is LL.

It belongs to the ATG8 family. In terms of assembly, interacts with ATG4. In terms of processing, the C-terminal 2 residues are removed by ATG4 to expose Gly-117 at the C-terminus. The C-terminal Gly is then amidated with phosphatidylethanolamine by an activating system similar to that for ubiquitin.

The protein localises to the cytoplasmic vesicle. It localises to the autophagosome membrane. Its subcellular location is the vacuole membrane. The protein resides in the cytoplasm. It is found in the cytoskeleton. Ubiquitin-like modifier involved in autophagosomes formation. May mediate the delivery of the autophagosomes to the vacuole via the microtubule cytoskeleton. In Oryza sativa subsp. indica (Rice), this protein is Autophagy-related protein 8B (ATG8B).